The sequence spans 91 residues: Chorion class B protein M3A5 (91 aa).

A central domain region spans residues 1–51 (VASENRYEGTVGVSGNLPFLGTADVAGEFPTAGIGEILYGCGNGAVGITRE). The right arm (Gly-rich tandem repeats) stretch occupies residues 52–91 (GGLGYGAGYGGGYGLGYGGYGGGYGLGYGGYGGCGCGCGY).

This sequence belongs to the chorion protein family.

In terms of biological role, this protein is one of many from the eggshell of the silk moth. The protein is Chorion class B protein M3A5 of Bombyx mori (Silk moth).